We begin with the raw amino-acid sequence, 431 residues long: MTDATRDPGFFTQSLSERDPELFGAITDELGRQRDEIELIASENIVSAAVMEAQGSVLTNKYAEGYPGRRYYGGCQYVDVAENLAIDRAKQLFNCEFANVQPNSGSQANQGVFQAILKPGDTILGMDLASGGHLTHGAAPNQSGKWFNAVHYGVRESDCLIDYDQVQALATEHQPKLIIAGGSAIPRQIDFAKFREIADSVGAYLLVDMAHFAGLVAAGEHPSPFPHADVATTTTHKTLRGPRGGMILTNNPDLAKKFNSAIFPGIQGGPLMHVIAGKAAAFGEALKPEFKSYQKQVRANAVALADELIKGGLDIVTGGTDTHVMLVDLRPKGVTGNIVDKALGRAHITTNKNGIPFDPEKPTVTSGIRLGTPAGTTRGFGEEEFREIARLIVEVVDGLAANGEDGNAAVEEAVRGKVAALCGRFPLYPNL.

(6S)-5,6,7,8-tetrahydrofolate contacts are provided by residues leucine 128 and 132 to 134; that span reads GHL. An N6-(pyridoxal phosphate)lysine modification is found at lysine 237.

The protein belongs to the SHMT family. As to quaternary structure, homodimer. Pyridoxal 5'-phosphate serves as cofactor.

The protein resides in the cytoplasm. It catalyses the reaction (6R)-5,10-methylene-5,6,7,8-tetrahydrofolate + glycine + H2O = (6S)-5,6,7,8-tetrahydrofolate + L-serine. Its pathway is one-carbon metabolism; tetrahydrofolate interconversion. It functions in the pathway amino-acid biosynthesis; glycine biosynthesis; glycine from L-serine: step 1/1. Functionally, catalyzes the reversible interconversion of serine and glycine with tetrahydrofolate (THF) serving as the one-carbon carrier. This reaction serves as the major source of one-carbon groups required for the biosynthesis of purines, thymidylate, methionine, and other important biomolecules. Also exhibits THF-independent aldolase activity toward beta-hydroxyamino acids, producing glycine and aldehydes, via a retro-aldol mechanism. The sequence is that of Serine hydroxymethyltransferase from Ruegeria sp. (strain TM1040) (Silicibacter sp.).